A 588-amino-acid chain; its full sequence is MNNSINHKFHHISRAEYQELLAVSRGDAVADYIIDNVSILDLINAGEISGPIVIKGRYIAGVGAEYADTPALQRIDARGATAVPGFIDAHLHIESSMMTPVTFETATLPRGLTTVICDPHEIVNVMGEAGFAWFARCAEQARQNQYLQVSSCVPALEGCDVNGASFTLEQMLAWRDHPQVTGLAEMMDYPGVINGQNALLDKLDAFRYLTLDGHCPGLGGKELNAYIAAGIENCHESYQLEEGRRKLQLGMSLMIREGSAASNLNALAPLINEFNSPQCMLCTDDRNPWEIAHEGHIDALIRRLIEQHNVPLHVAYRVASWSTARHFGLNHLGLLAPGKQADIVLLSDARKVTVQQVLVKGEPIDAQTLQAEESARLALSAPPYGNTIARQPVSASDFALQFTPGKRYRVIDVIHNELITHSRSSVYSENGFDRDDVCFIAVLERYGQRLAPACGLLGGFGLNEGALAATVSHDSHNIVVIGRSAEEMALAVNQVIQDGGGLCVVRNGQVQSHLPLPIAGLMSTDTAQSLAEQIDALKAAARECGPLPDEPFIQMAFLSLPVIPALKLTSQGLFDGEKFAFTTLEVTE.

This sequence belongs to the metallo-dependent hydrolases superfamily. Adenine deaminase family. Homodimer. Mn(2+) is required as a cofactor.

It catalyses the reaction adenine + H2O + H(+) = hypoxanthine + NH4(+). This is Adenine deaminase from Shigella flexneri.